The sequence spans 169 residues: UPF0303 protein Oant_1766 (169 aa).

It belongs to the UPF0303 family.

This is UPF0303 protein Oant_1766 from Brucella anthropi (strain ATCC 49188 / DSM 6882 / CCUG 24695 / JCM 21032 / LMG 3331 / NBRC 15819 / NCTC 12168 / Alc 37) (Ochrobactrum anthropi).